A 282-amino-acid chain; its full sequence is MEAVVDTNNFVLLLWSGAQLPKDIEAVVGSLTKKVGPNGKVSLEHSDRLHIASHAMSSFDVVLSGVCESPSLIHSMELLSKLAKLLKPDGKLILREPVGSNDSRSPEKIISTLKLSGFVSISQANEVKPSIVEISAQKPSFEVGAKTALSLSFAPKPAQPKAETSAAQIWTLSAQDIDDEDVDLLDSDTLLDEDDLKKPDPLSLKAACGPGSGKKKACKNCTCGLAEQENGDATEKKSVTSSCGSCYLGDAFRCSTCPYLGMPAFKPGEKIALTDRQLKGDL.

The interval 5-151 (VDTNNFVLLL…EVGAKTALSL (147 aa)) is N-terminal SAM-like domain. The segment at 152 to 196 (SFAPKPAQPKAETSAAQIWTLSAQDIDDEDVDLLDSDTLLDEDDL) is linker. 4 residues coordinate [2Fe-2S] cluster: cysteine 208, cysteine 218, cysteine 221, and cysteine 223. The segment at 208 to 223 (CGPGSGKKKACKNCTC) is fe-S binding site A. 4 residues coordinate [4Fe-4S] cluster: cysteine 243, cysteine 246, cysteine 254, and cysteine 257. 2 consecutive short sequence motifs (cx2C motif) follow at residues 243-246 (CGSC) and 254-257 (CSTC). Residues 243–257 (CGSCYLGDAFRCSTC) form a fe-S binding site B region.

Belongs to the anamorsin family. In terms of assembly, monomer. Requires [2Fe-2S] cluster as cofactor. It depends on [4Fe-4S] cluster as a cofactor.

It is found in the cytoplasm. The protein resides in the mitochondrion intermembrane space. Component of the cytosolic iron-sulfur (Fe-S) protein assembly (CIA) machinery. Required for the maturation of extramitochondrial Fe-S proteins. Part of an electron transfer chain functioning in an early step of cytosolic Fe-S biogenesis, facilitating the de novo assembly of a [4Fe-4S] cluster on the cytosolic Fe-S scaffold complex. Electrons are transferred from NADPH via a FAD- and FMN-containing diflavin oxidoreductase. Together with the diflavin oxidoreductase, also required for the assembly of the diferric tyrosyl radical cofactor of ribonucleotide reductase (RNR), probably by providing electrons for reduction during radical cofactor maturation in the catalytic small subunit. The sequence is that of Anamorsin homolog from Nematostella vectensis (Starlet sea anemone).